We begin with the raw amino-acid sequence, 362 residues long: UDP-N-acetylglucosamine--N-acetylmuramyl-(pentapeptide) pyrophosphoryl-undecaprenol N-acetylglucosamine transferase (362 aa).

UDP-N-acetyl-alpha-D-glucosamine is bound by residues 15 to 17 (TGG), Asn127, Arg165, Ser191, Ile247, 266 to 271 (ALTVSE), and Gln292.

It belongs to the glycosyltransferase 28 family. MurG subfamily.

It localises to the cell inner membrane. The catalysed reaction is di-trans,octa-cis-undecaprenyl diphospho-N-acetyl-alpha-D-muramoyl-L-alanyl-D-glutamyl-meso-2,6-diaminopimeloyl-D-alanyl-D-alanine + UDP-N-acetyl-alpha-D-glucosamine = di-trans,octa-cis-undecaprenyl diphospho-[N-acetyl-alpha-D-glucosaminyl-(1-&gt;4)]-N-acetyl-alpha-D-muramoyl-L-alanyl-D-glutamyl-meso-2,6-diaminopimeloyl-D-alanyl-D-alanine + UDP + H(+). It functions in the pathway cell wall biogenesis; peptidoglycan biosynthesis. In terms of biological role, cell wall formation. Catalyzes the transfer of a GlcNAc subunit on undecaprenyl-pyrophosphoryl-MurNAc-pentapeptide (lipid intermediate I) to form undecaprenyl-pyrophosphoryl-MurNAc-(pentapeptide)GlcNAc (lipid intermediate II). In Shewanella baltica (strain OS185), this protein is UDP-N-acetylglucosamine--N-acetylmuramyl-(pentapeptide) pyrophosphoryl-undecaprenol N-acetylglucosamine transferase.